The sequence spans 406 residues: Argininosuccinate synthase (406 aa).

ATP is bound by residues 11-19 and A38; that span reads AYSGGLDTS. Residues Y91 and S96 each coordinate L-citrulline. G121 serves as a coordination point for ATP. L-aspartate contacts are provided by T123, N127, and D128. N127 provides a ligand contact to L-citrulline. L-citrulline is bound by residues R131, S181, S190, E266, and Y278.

It belongs to the argininosuccinate synthase family. Type 1 subfamily. Homotetramer.

It is found in the cytoplasm. It carries out the reaction L-citrulline + L-aspartate + ATP = 2-(N(omega)-L-arginino)succinate + AMP + diphosphate + H(+). The protein operates within amino-acid biosynthesis; L-arginine biosynthesis; L-arginine from L-ornithine and carbamoyl phosphate: step 2/3. In Campylobacter hominis (strain ATCC BAA-381 / DSM 21671 / CCUG 45161 / LMG 19568 / NCTC 13146 / CH001A), this protein is Argininosuccinate synthase.